A 393-amino-acid polypeptide reads, in one-letter code: G protein-activated inward rectifier potassium channel 3 (393 aa).

Residues 1–23 (MAQENAAFSPGSEEPPRRRGRQR) form a disordered region. Residues 1 to 57 (MAQENAAFSPGSEEPPRRRGRQRYVEKDGRCNVQQGNVRETYRYLTDLFTTLVDLQW) are Cytoplasmic-facing. Residues 58 to 82 (RLSLLFFVLAYALTWLFFGAIWWLI) traverse the membrane as a helical segment. Residues 83–106 (AYGRGDLEHLEDTAWTPCVNNLNG) are Extracellular-facing. An intramembrane region (helical; Pore-forming) is located at residues 107-118 (FVAAFLFSIETE). Residues 119-125 (TTIGYGH) constitute an intramembrane region (pore-forming). The short motif at 120-125 (TIGYGH) is the Selectivity filter element. Residues 126-134 (RVITDQCPE) are Extracellular-facing. A helical membrane pass occupies residues 135-156 (GIVLLLLQAILGSMVNAFMVGC). Residues 157 to 393 (MFVKISQPNK…LPPPESESKV (237 aa)) are Cytoplasmic-facing. The tract at residues 360-393 (KVEEEGAGEGAGAGDGADKEHNGCLPPPESESKV) is disordered. Residues 384-393 (LPPPESESKV) show a composition bias toward pro residues. Residues 390–393 (ESKV) carry the PDZ-binding motif.

Belongs to the inward rectifier-type potassium channel (TC 1.A.2.1) family. KCNJ9 subfamily. As to quaternary structure, associates with KCNJ3/GIRK1 to form a G-protein-activated heteromultimer pore-forming unit. Interacts (via PDZ-binding motif) with SNX27 (via PDZ domain); the interaction is required when endocytosed to prevent degradation in lysosomes and promote recycling to the plasma membrane. In terms of tissue distribution, expressed mainly in the brain, some expression in the skeletal muscle.

It localises to the membrane. It catalyses the reaction K(+)(in) = K(+)(out). In terms of biological role, inward rectifier potassium channels are characterized by a greater tendency to allow potassium to flow into the cell rather than out of it. Their voltage dependence is regulated by the concentration of extracellular potassium; as external potassium is raised, the voltage range of the channel opening shifts to more positive voltages. The inward rectification is mainly due to the blockage of outward current by internal magnesium. This receptor is controlled by G proteins. Unable to produce channel activity when expressed alone. Forms a functional channel in association with KCNJ3/GIRK1. The chain is G protein-activated inward rectifier potassium channel 3 (Kcnj9) from Mus musculus (Mouse).